The primary structure comprises 927 residues: E3 ubiquitin-protein ligase HOS1 (927 aa).

The RING-type; degenerate zinc-finger motif lies at 53-93 (CRATRDLASCGRFVNYVLNPCGHASLCTECCQRCDVCPICR). Disordered regions lie at residues 678–699 (SGQFSEMEDASEGAKKSDLPDA), 782–806 (FKDLNRARGNSQLQGKRTEESSPEV), and 832–927 (VKSS…FAAR). Residues 797 to 806 (KRTEESSPEV) are compositionally biased toward basic and acidic residues. Polar residues-rich tracts occupy residues 832–851 (VKSSSNHLNGSSQKPESTFF) and 878–892 (NNNNVLATESRNNSG). Over residues 917–927 (KGRRRRRFAAR) the composition is skewed to basic residues.

Interacts with SCRM/ICE1, FLK and MSI4/FVE. As to expression, ubiquitously expressed with higher levels in leaf vasculature, roots and root tips.

The protein resides in the nucleus. It is found in the cytoplasm. The catalysed reaction is S-ubiquitinyl-[E2 ubiquitin-conjugating enzyme]-L-cysteine + [acceptor protein]-L-lysine = [E2 ubiquitin-conjugating enzyme]-L-cysteine + N(6)-ubiquitinyl-[acceptor protein]-L-lysine.. Its pathway is protein modification; protein ubiquitination. Its function is as follows. E3 ubiquitin-protein ligase that mediates ubiquitination and subsequent proteasomal degradation of the transcription factor ICE1. Acts as a negative regulator of cold signaling pathways. Probably involved in recruiting the NUP107-160 subcomplex of the nuclear pore complex to chromatin. Controls flowering time in response to ambient temperatures (16 and 23 degrees Celsius) and intermittent cold, probably via the regulation of FT and TSF levels. This chain is E3 ubiquitin-protein ligase HOS1 (HOS1), found in Arabidopsis thaliana (Mouse-ear cress).